Reading from the N-terminus, the 575-residue chain is MLTDPSQKYRAIAPVDLPDRRWPSRTLRQAPTWLSTDLRDGNQALFEPMNRERKLRLFHELVRIGFKEIEVGFPAASRIDFETVRHLIDEHLIPDDVTPMVMTQLRADLITETVKSVAGARRVIVHFYNAIAPAWREIVFGMSVPQIITLVEDHIALFRRLTAVHPETEWILQYSPETFCMAELEVSLEVCNAAIRAWDAGPRRRMIINLPTTVEVSTPNVFADQIEWMDRRLERREHLILSVHPHNDRGTAVACAEQAMLAGAQRVEGCLFGNGERSGNVDVVTLALNLYTQGIAPGLDFSDIAALARVAEECTALPIHPRHPYVGDLVFTAFSGSHQDAIAKGFAAQRPDAPWRVPYLPIDPTDLGRTYDSIVRVNSQSGKGGIAFLLQRDHHITMPRRMQVEFSAIVQALADASETELTSEHLWDVFERTYLAPVQASPDFSDRTSLAPALEQRRFIYRSHCLHPHPDGERIVLELADTEGNVRTVEGSGNGPIAATVAALGLALRIDSYEERSLGVGVGADAQALAIVEAALPTVPGSRFGVGRHENITTASIMAVLSAASRFAGEEQGKG.

In terms of domain architecture, Pyruvate carboxyltransferase spans 31–305; sequence PTWLSTDLRD…APGLDFSDIA (275 aa). 4 residues coordinate Mg(2+): aspartate 40, histidine 244, histidine 246, and asparagine 280. Residues 437–575 are regulatory domain; sequence PVQASPDFSD…RFAGEEQGKG (139 aa).

It belongs to the alpha-IPM synthase/homocitrate synthase family. LeuA type 2 subfamily. As to quaternary structure, homodimer. The cofactor is Mg(2+).

The protein localises to the cytoplasm. It carries out the reaction 3-methyl-2-oxobutanoate + acetyl-CoA + H2O = (2S)-2-isopropylmalate + CoA + H(+). The protein operates within amino-acid biosynthesis; L-leucine biosynthesis; L-leucine from 3-methyl-2-oxobutanoate: step 1/4. In terms of biological role, catalyzes the condensation of the acetyl group of acetyl-CoA with 3-methyl-2-oxobutanoate (2-ketoisovalerate) to form 3-carboxy-3-hydroxy-4-methylpentanoate (2-isopropylmalate). This Herbaspirillum seropedicae (strain SmR1) protein is 2-isopropylmalate synthase.